A 1291-amino-acid polypeptide reads, in one-letter code: DNA-directed RNA polymerase subunit beta' (1291 aa).

Residues Cys-60, Cys-62, Cys-75, and Cys-78 each contribute to the Zn(2+) site. Asp-535, Asp-537, and Asp-539 together coordinate Mg(2+). 4 residues coordinate Zn(2+): Cys-878, Cys-954, Cys-961, and Cys-964.

It belongs to the RNA polymerase beta' chain family. The RNAP catalytic core consists of 2 alpha, 1 beta, 1 beta' and 1 omega subunit. When a sigma factor is associated with the core the holoenzyme is formed, which can initiate transcription. Mg(2+) is required as a cofactor. Requires Zn(2+) as cofactor.

It carries out the reaction RNA(n) + a ribonucleoside 5'-triphosphate = RNA(n+1) + diphosphate. In terms of biological role, DNA-dependent RNA polymerase catalyzes the transcription of DNA into RNA using the four ribonucleoside triphosphates as substrates. This chain is DNA-directed RNA polymerase subunit beta', found in Thermobifida fusca (strain YX).